A 623-amino-acid chain; its full sequence is Kelch-like protein diablo (623 aa).

Positions 1–54 (MGDLPGSGSTAQPRDAAVTGTGGNSTAGGGSSVGSTAVDRPPSPARLSHTSEKH) are disordered. Residue threonine 19 is modified to Phosphothreonine. Positions 20 to 32 (GTGGNSTAGGGSS) are enriched in gly residues. The 68-residue stretch at 72–139 (CDVVLNVGGR…CYTAHIIVEE (68 aa)) folds into the BTB domain. The BACK domain occupies 174–276 (CLGIRAFADT…SPKFLVGTVG (103 aa)). Kelch repeat units follow at residues 323–369 (VLFA…VLND), 371–417 (LYAV…VLDG), 418–464 (FLYA…VLGG), 466–511 (LYAI…VFNN), 513–558 (IYAV…VVNG), and 559–605 (QLYA…VMRA).

It functions in the pathway protein modification; protein ubiquitination. In terms of biological role, probable substrate-specific adapter of an E3 ubiquitin-protein ligase complex which mediates the ubiquitination and subsequent proteasomal degradation of target proteins. May have a role in synapse differentiation and growth. This Drosophila melanogaster (Fruit fly) protein is Kelch-like protein diablo.